Consider the following 184-residue polypeptide: Photosystem I assembly protein Ycf4 (184 aa).

A run of 2 helical transmembrane segments spans residues Phe22–Ser42 and Ile57–Ser77.

Belongs to the Ycf4 family.

It is found in the plastid. The protein localises to the chloroplast thylakoid membrane. Its function is as follows. Seems to be required for the assembly of the photosystem I complex. The chain is Photosystem I assembly protein Ycf4 from Arabis hirsuta (Hairy rock-cress).